A 140-amino-acid polypeptide reads, in one-letter code: MAKKVKAIVKLQIPAGKANPAPPIGPALGQHGINIMGFCKEYNERTASMVGTIVPAEITIYDDRSFTFITKTPPAADLLKKAAGVTSGSGTPSKSVVAVISKGQLREIASVKMKDLNAVNIEGAERIIEGTARSMGIKVE.

The protein belongs to the universal ribosomal protein uL11 family. As to quaternary structure, part of the ribosomal stalk of the 50S ribosomal subunit. Interacts with L10 and the large rRNA to form the base of the stalk. L10 forms an elongated spine to which L12 dimers bind in a sequential fashion forming a multimeric L10(L12)X complex. Post-translationally, one or more lysine residues are methylated.

Forms part of the ribosomal stalk which helps the ribosome interact with GTP-bound translation factors. This is Large ribosomal subunit protein uL11 from Dehalococcoides mccartyi (strain CBDB1).